A 152-amino-acid polypeptide reads, in one-letter code: Cuticle protein 64 (152 aa).

Tandem repeats lie at residues 27 to 30 (AAPA), 33 to 37 (AAPAV), 39 to 42 (AAPA), 86 to 89 (AAPV), 92 to 95 (AAPA), 98 to 101 (AAPA), and 127 to 130 (AAPA).

Component of the cuticle of migratory locust which contains more than 100 different structural proteins. In Locusta migratoria (Migratory locust), this protein is Cuticle protein 64.